The chain runs to 299 residues: tRNA dimethylallyltransferase (299 aa).

13–20 (GPTASGKT) contributes to the ATP binding site. 15–20 (TASGKT) is a substrate binding site. An interaction with substrate tRNA region spans residues 38-41 (DSRQ).

This sequence belongs to the IPP transferase family. In terms of assembly, monomer. The cofactor is Mg(2+).

It catalyses the reaction adenosine(37) in tRNA + dimethylallyl diphosphate = N(6)-dimethylallyladenosine(37) in tRNA + diphosphate. In terms of biological role, catalyzes the transfer of a dimethylallyl group onto the adenine at position 37 in tRNAs that read codons beginning with uridine, leading to the formation of N6-(dimethylallyl)adenosine (i(6)A). This chain is tRNA dimethylallyltransferase, found in Prochlorococcus marinus subsp. pastoris (strain CCMP1986 / NIES-2087 / MED4).